A 213-amino-acid polypeptide reads, in one-letter code: Adenylate kinase (213 aa).

Residue 10 to 15 (GSGKGT) participates in ATP binding. The interval 30–59 (STGDMLRTTVNKESVLGKNIQAIIKLGNLV) is NMP. AMP-binding positions include Thr31, Arg36, 57–59 (NLV), 85–88 (GFPR), and Gln92. The LID stretch occupies residues 122 to 159 (GRMVHEPSGRIYHVTFNPPKQKGKDDITGENLIIRQDD). Residues Arg123 and 132 to 133 (IY) contribute to the ATP site. Arg156 and Arg167 together coordinate AMP. Cys199 contacts ATP.

It belongs to the adenylate kinase family. As to quaternary structure, monomer.

The protein resides in the cytoplasm. It catalyses the reaction AMP + ATP = 2 ADP. It participates in purine metabolism; AMP biosynthesis via salvage pathway; AMP from ADP: step 1/1. Its function is as follows. Catalyzes the reversible transfer of the terminal phosphate group between ATP and AMP. Plays an important role in cellular energy homeostasis and in adenine nucleotide metabolism. In Baumannia cicadellinicola subsp. Homalodisca coagulata, this protein is Adenylate kinase.